We begin with the raw amino-acid sequence, 137 residues long: Large ribosomal subunit protein uL16 (137 aa).

The protein belongs to the universal ribosomal protein uL16 family. In terms of assembly, part of the 50S ribosomal subunit.

Its function is as follows. Binds 23S rRNA and is also seen to make contacts with the A and possibly P site tRNAs. The chain is Large ribosomal subunit protein uL16 from Mycoplasma capricolum subsp. capricolum (strain California kid / ATCC 27343 / NCTC 10154).